We begin with the raw amino-acid sequence, 580 residues long: Multidrug resistance-like ATP-binding protein MdlB (580 aa).

Residues 25–310 (IILAFFLLLS…ITIQQSILQQ (286 aa)) form the ABC transmembrane type-1 domain. 5 helical membrane-spanning segments follow: residues 26–46 (ILAF…PILI), 61–81 (FQLI…AVFF), 142–162 (VGPT…AMFT), 165–185 (WHMA…MSIY), and 258–278 (LLSA…SIGV). The ABC transporter domain maps to 341 to 575 (INIKNLSFKY…KGFYWKMYNF (235 aa)). 375-382 (GQTGSGKS) provides a ligand contact to ATP.

Belongs to the ABC transporter superfamily. Drug exporter-2 (TC 3.A.1.117) family.

Its subcellular location is the cell membrane. The catalysed reaction is ATP + H2O + xenobioticSide 1 = ADP + phosphate + xenobioticSide 2.. This chain is Multidrug resistance-like ATP-binding protein MdlB (mdlB), found in Buchnera aphidicola subsp. Schizaphis graminum (strain Sg).